Consider the following 428-residue polypeptide: D-amino acid dehydrogenase (428 aa).

3 to 17 (VVILGSGVVGVASAY) contacts FAD.

The protein belongs to the DadA oxidoreductase family. Requires FAD as cofactor.

The catalysed reaction is a D-alpha-amino acid + A + H2O = a 2-oxocarboxylate + AH2 + NH4(+). It participates in amino-acid degradation; D-alanine degradation; NH(3) and pyruvate from D-alanine: step 1/1. Its function is as follows. Oxidative deamination of D-amino acids. The protein is D-amino acid dehydrogenase of Burkholderia cenocepacia (strain HI2424).